Reading from the N-terminus, the 474-residue chain is Aromatic amino acid aminotransferase C56E4.03 (474 aa).

The protein belongs to the class-I pyridoxal-phosphate-dependent aminotransferase family. The cofactor is pyridoxal 5'-phosphate.

It is found in the cytoplasm. It catalyses the reaction an aromatic L-alpha-amino acid + 2-oxoglutarate = an aromatic oxo-acid + L-glutamate. Its function is as follows. Has aromatic amino acid transaminase activity. This chain is Aromatic amino acid aminotransferase C56E4.03, found in Schizosaccharomyces pombe (strain 972 / ATCC 24843) (Fission yeast).